A 695-amino-acid chain; its full sequence is L-type lectin-domain containing receptor kinase S.7 (695 aa).

The first 23 residues, 1 to 23, serve as a signal peptide directing secretion; the sequence is MPPRCRRLPLLFILLLAVRPLSA. Residues 24–331 lie on the Extracellular side of the membrane; that stretch reads AAASSIAAAP…NHRRRHLFYK (308 aa). The segment at 37-276 is legume-lectin like; the sequence is YRRISWASNL…VERWTFRTFG (240 aa). N-linked (GlcNAc...) asparagine glycosylation is found at Asn45 and Asn279. Residues 286–320 are compositionally biased toward pro residues; it reads PTKYIGPMPPNNQPLPPPPSPSPSPPPPSPPPPPH. Positions 286 to 323 are disordered; the sequence is PTKYIGPMPPNNQPLPPPPSPSPSPPPPSPPPPPHPNH. Residues 332–352 form a helical membrane-spanning segment; the sequence is VLGGVLGGMVLLGLVVVGSAV. Residues 353–695 are Cytoplasmic-facing; sequence LLGRSVRRKN…TANTAFFSCR (343 aa). Position 376 is a phosphothreonine (Thr376). The residue at position 378 (Ser378) is a Phosphoserine. 2 positions are modified to phosphothreonine: Thr386 and Thr403. One can recognise a Protein kinase domain in the interval 389–661; that stretch reads FDSGNVIGVG…SMLDGTAPLI (273 aa). ATP contacts are provided by residues 395 to 403 and Lys418; that span reads IGVGGSGAT. Asp514 functions as the Proton acceptor in the catalytic mechanism. A Phosphothreonine modification is found at Thr657.

This sequence in the N-terminal section; belongs to the leguminous lectin family. It in the C-terminal section; belongs to the protein kinase superfamily. Ser/Thr protein kinase family. As to quaternary structure, interacts with INP1. Interaction with INP1 is required for DAF1 polar localization at the future aperture sites in tetrads. Post-translationally, autophosphorylated at Thr-376; Ser-378; Thr-386; Thr-403 and Thr-657. In terms of tissue distribution, expressed in roots, leaves, lemma, palea, pistil and anthers.

Its subcellular location is the cell membrane. It is found in the cytoplasm. The protein localises to the cytosol. It carries out the reaction L-seryl-[protein] + ATP = O-phospho-L-seryl-[protein] + ADP + H(+). The enzyme catalyses L-threonyl-[protein] + ATP = O-phospho-L-threonyl-[protein] + ADP + H(+). Its function is as follows. Legume-lectin receptor-like kinase required for normal pollen development and male fertility. Regulates pollen exine assembly and aperture development. Plays a critical role in annulus formation, and may participate in the formation of the fibrillar-granular layer underneath the operculum. May function by regulating the expression of genes involved in pollen exine development. Kinase activity is required for its function in pollen development. This Oryza sativa subsp. japonica (Rice) protein is L-type lectin-domain containing receptor kinase S.7.